The chain runs to 2924 residues: Probable polyketide synthase 6 (2924 aa).

Residues 11–442 form the Ketosynthase family 3 (KS3) domain; it reads EKGVAIVGIG…GSNCCLLISE (432 aa). Residues cysteine 181, histidine 323, and histidine 362 each act as for beta-ketoacyl synthase activity in the active site. Positions 635 to 668 are acyl/malonyl transferase; it reads GVNPSFILGHSLGEISASYCSGMIDLDTFCYTVY. Serine 645 acts as the For acyl/malonyl transferase activity in catalysis. The N-terminal hotdog fold stretch occupies residues 925–1047; sequence IDHLGLSNSY…SNFQLLDHGN (123 aa). Positions 925–1210 constitute a PKS/mFAS DH domain; the sequence is IDHLGLSNSY…CKSLIPIKDS (286 aa). Histidine 959 serves as the catalytic Proton acceptor; for dehydratase activity. The tract at residues 1064–1210 is C-terminal hotdog fold; the sequence is NLSKLTKNEL…CKSLIPIKDS (147 aa). Residue aspartate 1122 is the Proton donor; for dehydratase activity of the active site. The Carrier domain maps to 2431–2508; sequence TGNKNIDELF…ISIKMILNSL (78 aa). Serine 2468 carries the O-(pantetheine 4'-phosphoryl)serine modification. The helical transmembrane segment at 2551 to 2571 threads the bilayer; it reads KIILLTGTTGFLGGFLLFNML.

It depends on pantetheine 4'-phosphate as a cofactor.

The protein resides in the membrane. Probable polyketide synthase. This Dictyostelium discoideum (Social amoeba) protein is Probable polyketide synthase 6 (pks6).